The primary structure comprises 249 residues: Transcriptional activator protein EsaR (249 aa).

The HTH luxR-type domain maps to 174–239 (QSADKTIFSS…QAIRLGVELD (66 aa)). Positions 198–217 (YAEIAAITGISVSTVKFHIK) form a DNA-binding region, H-T-H motif.

Belongs to the autoinducer-regulated transcriptional regulatory protein family.

Functions as a potential OhlL-responsive transcriptional regulator. In Pantoea stewartii subsp. stewartii (Erwinia stewartii), this protein is Transcriptional activator protein EsaR (esaR).